A 364-amino-acid chain; its full sequence is Uroporphyrinogen decarboxylase (364 aa).

Residues 28-32 (RQAGR), Asp78, Tyr160, Thr215, and His333 contribute to the substrate site.

This sequence belongs to the uroporphyrinogen decarboxylase family. As to quaternary structure, homodimer.

Its subcellular location is the cytoplasm. The catalysed reaction is uroporphyrinogen III + 4 H(+) = coproporphyrinogen III + 4 CO2. Its pathway is porphyrin-containing compound metabolism; protoporphyrin-IX biosynthesis; coproporphyrinogen-III from 5-aminolevulinate: step 4/4. Catalyzes the decarboxylation of four acetate groups of uroporphyrinogen-III to yield coproporphyrinogen-III. The protein is Uroporphyrinogen decarboxylase of Burkholderia mallei (strain NCTC 10247).